Here is a 199-residue protein sequence, read N- to C-terminus: Peptidyl-prolyl cis-trans isomerase CYP22 (199 aa).

Positions Phe35 to Glu198 constitute a PPIase cyclophilin-type domain.

This sequence belongs to the cyclophilin-type PPIase family. As to expression, ubiquitous.

It carries out the reaction [protein]-peptidylproline (omega=180) = [protein]-peptidylproline (omega=0). Functionally, PPIases accelerate the folding of proteins. It catalyzes the cis-trans isomerization of proline imidic peptide bonds in oligopeptides. In Arabidopsis thaliana (Mouse-ear cress), this protein is Peptidyl-prolyl cis-trans isomerase CYP22 (CYP22).